A 129-amino-acid chain; its full sequence is Large ribosomal subunit protein bL21 (129 aa).

Residues 102–129 (TDNAKPTKGPRPKKEKVAKEATKEDAAA) are disordered. Residues 116-129 (EKVAKEATKEDAAA) are compositionally biased toward basic and acidic residues.

The protein belongs to the bacterial ribosomal protein bL21 family. As to quaternary structure, part of the 50S ribosomal subunit. Contacts protein L20.

Its function is as follows. This protein binds to 23S rRNA in the presence of protein L20. The polypeptide is Large ribosomal subunit protein bL21 (Bradyrhizobium diazoefficiens (strain JCM 10833 / BCRC 13528 / IAM 13628 / NBRC 14792 / USDA 110)).